We begin with the raw amino-acid sequence, 313 residues long: Peptidyl-prolyl cis-trans isomerase 9 (313 aa).

In terms of domain architecture, PPIase cyclophilin-type spans 9–174 (FLDMALDEKP…AKVRIFNSGE (166 aa)). Composition is skewed to basic and acidic residues over residues 216–230 (EERESDFSSKTESSR) and 253–269 (RGDRNRRTQRADRKDDF). Disordered regions lie at residues 216–274 (EERE…IAVR) and 288–313 (TPEHWRRNAPSKWQQGSYTHPVDLQP).

The protein belongs to the cyclophilin-type PPIase family.

It carries out the reaction [protein]-peptidylproline (omega=180) = [protein]-peptidylproline (omega=0). PPIases accelerate the folding of proteins. It catalyzes the cis-trans isomerization of proline imid ic peptide bonds in oligopeptides. Thought to function as a catalyst in the folding and modification of cuticle collagens. In Caenorhabditis briggsae, this protein is Peptidyl-prolyl cis-trans isomerase 9.